Here is a 775-residue protein sequence, read N- to C-terminus: Endothelin-converting enzyme-like 1 (775 aa).

Residues 1-59 are Cytoplasmic-facing; the sequence is MEPPYSLTAHYDEFQEVKYVSRCGAGGARGASLPPGFPLGAARSATGARSGLPRWNRRE. Residues 60 to 82 traverse the membrane as a helical; Signal-anchor for type II membrane protein segment; it reads VCLLSGLVFAAGLCAILAAMLAL. Residues 83–775 lie on the Lumenal side of the membrane; it reads KYLGPVAAGG…MNPAHKCSVW (693 aa). Residues 98 to 775 form the Peptidase M13 domain; it reads GCPERKAFAR…MNPAHKCSVW (678 aa). 4 cysteine pairs are disulfide-bonded: Cys123/Cys760, Cys131/Cys720, Cys187/Cys441, and Cys649/Cys772. Residues Asn255 and Asn322 are each glycosylated (N-linked (GlcNAc...) asparagine). Position 612 (His612) interacts with Zn(2+). Glu613 is an active-site residue. His616 contributes to the Zn(2+) binding site. Asn656 carries an N-linked (GlcNAc...) asparagine glycan. Glu672 is a binding site for Zn(2+). Asp676 functions as the Proton donor in the catalytic mechanism.

It belongs to the peptidase M13 family. The cofactor is Zn(2+). N-glycosylated. As to expression, highly expressed in the CNS, in particular in putamen, spinal cord, medulla and subthalamic nucleus. A strong signal was also detected in uterine subepithelial cells and around renal blood vessels. Detected at lower levels in amygdala, caudate, thalamus, pancreas and skeletal muscle. Detected at very low levels in substantia nigra, cerebellum, cortex, corpus callosum and hippocampus.

Its subcellular location is the membrane. Its function is as follows. May contribute to the degradation of peptide hormones and be involved in the inactivation of neuronal peptides. The sequence is that of Endothelin-converting enzyme-like 1 (ECEL1) from Homo sapiens (Human).